Here is a 191-residue protein sequence, read N- to C-terminus: Casparian strip membrane protein 4 (191 aa).

Topologically, residues 1–27 are cytoplasmic; the sequence is MKTGSVEAGEQASEDATPRRGKKLNRG. The helical transmembrane segment at 28–48 threads the bilayer; sequence ILILDLVLRVFGAICTLGSAV. The Extracellular portion of the chain corresponds to 49–72; sequence AMGTTSQTLPSSSQFFRFRAKYND. A helical transmembrane segment spans residues 73 to 93; the sequence is LPMFMFFAIANSIVCAYLVLS. The Cytoplasmic segment spans residues 94–110; that stretch reads LRLSIFHIIRSAGIITR. Residues 111-131 traverse the membrane as a helical segment; that stretch reads IILVTFDMVMLVLLTCGASAA. Residues 132-160 lie on the Extracellular side of the membrane; sequence TSIVYLAHKGNASANWLPFCVRFSHFCNR. N142 is a glycosylation site (N-linked (GlcNAc...) asparagine). A helical transmembrane segment spans residues 161 to 181; the sequence is ISGSLIGSFFSIIIFMLLVIL. Residues 182–191 lie on the Cytoplasmic side of the membrane; that stretch reads SAVSQFSICN.

Belongs to the Casparian strip membrane proteins (CASP) family. As to quaternary structure, homodimer and heterodimers.

It is found in the cell membrane. In terms of biological role, regulates membrane-cell wall junctions and localized cell wall deposition. Required for establishment of the Casparian strip membrane domain (CSD) and the subsequent formation of Casparian strips, a cell wall modification of the root endodermis that determines an apoplastic barrier between the intraorganismal apoplasm and the extraorganismal apoplasm and prevents lateral diffusion. This chain is Casparian strip membrane protein 4, found in Ricinus communis (Castor bean).